We begin with the raw amino-acid sequence, 62 residues long: uncharacterized protein (62 aa).

This is an uncharacterized protein from Sulfolobus islandicus filamentous virus (isolate Iceland/Hveragerdi) (SIFV).